The following is a 476-amino-acid chain: FAD-dependent monooxygenase ausM (476 aa).

FAD is bound by residues Glu-41, Gly-55, and Arg-114. Tyr-222 is a catalytic residue. Positions 314 and 327 each coordinate FAD. A helical transmembrane segment spans residues Leu-447 to Tyr-467.

It belongs to the paxM FAD-dependent monooxygenase family. The cofactor is FAD.

It localises to the membrane. The protein operates within secondary metabolite biosynthesis; terpenoid biosynthesis. Functionally, FAD-dependent monooxygenase; part of the gene cluster A that mediates the biosynthesis of the fungal meroterpenoid acetoxydehydroaustin. The first step of the pathway is the synthesis of 3,5-dimethylorsellinic acid by the polyketide synthase ausA. 3,5-dimethylorsellinic acid is then prenylated by the polyprenyl transferase ausN. Further epoxidation by the FAD-dependent monooxygenase ausM and cyclization by the probable terpene cyclase ausL lead to the formation of protoaustinoid A. Protoaustinoid A is then oxidized to spiro-lactone preaustinoid A3 by the combined action of the FAD-binding monooxygenases ausB and ausC, and the dioxygenase ausE. Acid-catalyzed keto-rearrangement and ring contraction of the tetraketide portion of preaustinoid A3 by ausJ lead to the formation of preaustinoid A4. The aldo-keto reductase ausK, with the help of ausH, is involved in the next step by transforming preaustinoid A4 into isoaustinone which is in turn hydroxylated by the P450 monooxygenase ausI to form austinolide. The cytochrome P450 monooxygenase ausG then modifies austinolide to austinol. Austinol is further acetylated to austin by the O-acetyltransferase ausP, which spontaneously changes to dehydroaustin. The cytochrome P450 monooxygenase then converts dehydroaustin is into 7-dehydrodehydroaustin. The hydroxylation catalyzed by ausR permits the second O-acetyltransferase ausQ to add an additional acetyl group to the molecule, leading to the formation of acetoxydehydroaustin. Due to genetic rearrangements of the clusters and the subsequent loss of some enzymes, the end product of the Penicillium brasilianum austinoid biosynthesis clusters is acetoxydehydroaustin. The sequence is that of FAD-dependent monooxygenase ausM from Penicillium brasilianum.